Here is a 383-residue protein sequence, read N- to C-terminus: E3 ubiquitin-protein ligase Os04g0590900 (383 aa).

A helical transmembrane segment spans residues 53–73 (PVFSPLVIAIIGVLASAFLLV). Residues 105–129 (GGAGSGGRHGHGQSRSHESWNVSPP) are disordered. An RING-type; atypical zinc finger spans residues 157 to 199 (CSVCLGEFSDGESLRLLPRCSHAFHQQCIDTWLKSHSNCPLCR). Disordered regions lie at residues 269–291 (EANGAAEIREEGSPPKRGASSFD) and 320–383 (LLAG…DHPM).

The protein resides in the membrane. It catalyses the reaction S-ubiquitinyl-[E2 ubiquitin-conjugating enzyme]-L-cysteine + [acceptor protein]-L-lysine = [E2 ubiquitin-conjugating enzyme]-L-cysteine + N(6)-ubiquitinyl-[acceptor protein]-L-lysine.. It functions in the pathway protein modification; protein ubiquitination. Possesses E3 ubiquitin-protein ligase in vitro. This Oryza sativa subsp. japonica (Rice) protein is E3 ubiquitin-protein ligase Os04g0590900.